The sequence spans 152 residues: Deoxyuridine 5'-triphosphate nucleotidohydrolase (152 aa).

Substrate contacts are provided by residues 71–73 (RSG), Asn-84, 88–90 (LID), and Met-98.

This sequence belongs to the dUTPase family. Mg(2+) serves as cofactor.

The catalysed reaction is dUTP + H2O = dUMP + diphosphate + H(+). It functions in the pathway pyrimidine metabolism; dUMP biosynthesis; dUMP from dCTP (dUTP route): step 2/2. Its function is as follows. This enzyme is involved in nucleotide metabolism: it produces dUMP, the immediate precursor of thymidine nucleotides and it decreases the intracellular concentration of dUTP so that uracil cannot be incorporated into DNA. The protein is Deoxyuridine 5'-triphosphate nucleotidohydrolase of Shewanella baltica (strain OS155 / ATCC BAA-1091).